We begin with the raw amino-acid sequence, 215 residues long: Cytochrome b6 (215 aa).

A helical transmembrane segment spans residues 32–52 (IFYCIGGITFTCFIMQVASGF). C35 is a heme c binding site. Heme b-binding residues include H86 and H100. 3 helical membrane-spanning segments follow: residues 90–110 (ASMM…TGGF), 116–136 (LTWV…VTGY), and 186–206 (LHTF…FLMI). Residues H187 and H202 each coordinate heme b.

This sequence belongs to the cytochrome b family. PetB subfamily. In terms of assembly, the 4 large subunits of the cytochrome b6-f complex are cytochrome b6, subunit IV (17 kDa polypeptide, PetD), cytochrome f and the Rieske protein, while the 4 small subunits are PetG, PetL, PetM and PetN. The complex functions as a dimer. It depends on heme b as a cofactor. Heme c serves as cofactor.

It is found in the plastid. Its subcellular location is the chloroplast thylakoid membrane. Its function is as follows. Component of the cytochrome b6-f complex, which mediates electron transfer between photosystem II (PSII) and photosystem I (PSI), cyclic electron flow around PSI, and state transitions. In Mesostigma viride (Green alga), this protein is Cytochrome b6.